Consider the following 101-residue polypeptide: uncharacterized protein (101 aa).

Residues 58-80 traverse the membrane as a helical segment; that stretch reads VFPSLNIIILMSDALMFFLRSSI.

The protein localises to the membrane. This is an uncharacterized protein from Saccharomyces cerevisiae (strain ATCC 204508 / S288c) (Baker's yeast).